The primary structure comprises 116 residues: S-adenosylmethionine decarboxylase proenzyme (116 aa).

S62 acts as the Schiff-base intermediate with substrate; via pyruvic acid in catalysis. S62 is modified (pyruvic acid (Ser); by autocatalysis). The Proton acceptor; for processing activity role is filled by H67. The Proton donor; for catalytic activity role is filled by C82.

Belongs to the prokaryotic AdoMetDC family. Type 1 subfamily. Heterotetramer of two alpha and two beta chains arranged as a dimer of alpha/beta heterodimers. Requires pyruvate as cofactor. In terms of processing, is synthesized initially as an inactive proenzyme. Formation of the active enzyme involves a self-maturation process in which the active site pyruvoyl group is generated from an internal serine residue via an autocatalytic post-translational modification. Two non-identical subunits are generated from the proenzyme in this reaction, and the pyruvate is formed at the N-terminus of the alpha chain, which is derived from the carboxyl end of the proenzyme. The post-translation cleavage follows an unusual pathway, termed non-hydrolytic serinolysis, in which the side chain hydroxyl group of the serine supplies its oxygen atom to form the C-terminus of the beta chain, while the remainder of the serine residue undergoes an oxidative deamination to produce ammonia and the pyruvoyl group blocking the N-terminus of the alpha chain.

The enzyme catalyses S-adenosyl-L-methionine + H(+) = S-adenosyl 3-(methylsulfanyl)propylamine + CO2. It participates in amine and polyamine biosynthesis; S-adenosylmethioninamine biosynthesis; S-adenosylmethioninamine from S-adenosyl-L-methionine: step 1/1. Its function is as follows. Catalyzes the decarboxylation of S-adenosylmethionine to S-adenosylmethioninamine (dcAdoMet), the propylamine donor required for the synthesis of the polyamines spermine and spermidine from the diamine putrescine. The chain is S-adenosylmethionine decarboxylase proenzyme from Thermomicrobium roseum (strain ATCC 27502 / DSM 5159 / P-2).